A 161-amino-acid polypeptide reads, in one-letter code: Large ribosomal subunit protein uL11 (161 aa).

The protein belongs to the universal ribosomal protein uL11 family. In terms of assembly, part of the ribosomal stalk of the 50S ribosomal subunit. Interacts with L10 and the large rRNA to form the base of the stalk. L10 forms an elongated spine to which L12 dimers bind in a sequential fashion forming a multimeric L10(L12)X complex.

Forms part of the ribosomal stalk which helps the ribosome interact with GTP-bound translation factors. This Methanocaldococcus jannaschii (strain ATCC 43067 / DSM 2661 / JAL-1 / JCM 10045 / NBRC 100440) (Methanococcus jannaschii) protein is Large ribosomal subunit protein uL11.